A 218-amino-acid polypeptide reads, in one-letter code: MSSINITNVTVLDNPAPFVNPFQFEISYECLTSLKDDLEWKLIYVGSAEDETYDQVLESVLVGPVNVGNYRFVLQADSPDPLKIREEDIIGVTVLLLTCSYMDQEFIRVGYYVNNDYDDEQLREEPPTKVLIDKVQRNILTDKPRVTKFPINFHPENEQTLGDGPAPTEPFADSVVNGEAPVFLEQPQKLQEIEQFDDSDVNGEAIALLDQPQNLQET.

Belongs to the ASF1 family. In terms of assembly, interacts with histone H3 and histone H4. Interacts strongly with the N-terminus of TOUSLED. Post-translationally, phosphorylated in vitro by TOUSLED.

It localises to the nucleus. Its function is as follows. Histone chaperone that facilitates histone deposition and histone exchange and removal during nucleosome assembly and disassembly. This is Histone chaperone ASF1B (ASF1B) from Arabidopsis thaliana (Mouse-ear cress).